Consider the following 337-residue polypeptide: Phosphoenolpyruvate transferase (337 aa).

Residue Asp69 coordinates 7,8-didemethyl-8-hydroxy-5-deazariboflavin.

It belongs to the CofD family. Homodimer. The cofactor is Mg(2+).

The catalysed reaction is enolpyruvoyl-2-diphospho-5'-guanosine + 7,8-didemethyl-8-hydroxy-5-deazariboflavin = dehydro coenzyme F420-0 + GMP + H(+). It participates in cofactor biosynthesis; coenzyme F420 biosynthesis. Catalyzes the transfer of the phosphoenolpyruvate moiety from enoylpyruvoyl-2-diphospho-5'-guanosine (EPPG) to 7,8-didemethyl-8-hydroxy-5-deazariboflavin (FO) with the formation of dehydro coenzyme F420-0 and GMP. The polypeptide is Phosphoenolpyruvate transferase (Mycobacterium avium (strain 104)).